The chain runs to 138 residues: Holo-[acyl-carrier-protein] synthase (138 aa).

The Mg(2+) site is built by Asp8 and Glu54.

Belongs to the P-Pant transferase superfamily. AcpS family. Requires Mg(2+) as cofactor.

The protein resides in the cytoplasm. The enzyme catalyses apo-[ACP] + CoA = holo-[ACP] + adenosine 3',5'-bisphosphate + H(+). Functionally, transfers the 4'-phosphopantetheine moiety from coenzyme A to a Ser of acyl-carrier-protein. This Roseiflexus sp. (strain RS-1) protein is Holo-[acyl-carrier-protein] synthase.